We begin with the raw amino-acid sequence, 352 residues long: N-acetyl-gamma-glutamyl-phosphate reductase 1 (352 aa).

Belongs to the NAGSA dehydrogenase family. Type 1 subfamily.

The protein localises to the cytoplasm. It catalyses the reaction N-acetyl-L-glutamate 5-semialdehyde + phosphate + NADP(+) = N-acetyl-L-glutamyl 5-phosphate + NADPH + H(+). Its pathway is amino-acid biosynthesis; L-arginine biosynthesis; N(2)-acetyl-L-ornithine from L-glutamate: step 3/4. In terms of biological role, catalyzes the NADPH-dependent reduction of N-acetyl-5-glutamyl phosphate to yield N-acetyl-L-glutamate 5-semialdehyde. The chain is N-acetyl-gamma-glutamyl-phosphate reductase 1 from Nostoc sp. (strain PCC 7120 / SAG 25.82 / UTEX 2576).